A 303-amino-acid polypeptide reads, in one-letter code: Cell division protein ZipA (303 aa).

Residues 1–6 (MMQDLR) lie on the Periplasmic side of the membrane. A helical membrane pass occupies residues 7 to 27 (LILIIVGAIAIIALLLHGLWT). Topologically, residues 28–303 (SRKERSSLFR…RIRSTLGVQV (276 aa)) are cytoplasmic. 3 disordered regions span residues 39 to 61 (RPVK…DEAF), 66 to 85 (KPYA…EPAI), and 124 to 159 (EQEP…GEKE). Basic and acidic residues-rich tracts occupy residues 75 to 85 (SHQEYKAEPAI) and 139 to 159 (ESER…GEKE).

The protein belongs to the ZipA family. In terms of assembly, interacts with FtsZ via their C-terminal domains.

It is found in the cell inner membrane. Its function is as follows. Essential cell division protein that stabilizes the FtsZ protofilaments by cross-linking them and that serves as a cytoplasmic membrane anchor for the Z ring. Also required for the recruitment to the septal ring of downstream cell division proteins. In Photorhabdus laumondii subsp. laumondii (strain DSM 15139 / CIP 105565 / TT01) (Photorhabdus luminescens subsp. laumondii), this protein is Cell division protein ZipA.